The sequence spans 84 residues: Extender of the chronological lifespan protein 2 (84 aa).

This sequence belongs to the ecl1 family.

It localises to the nucleus. Its function is as follows. Involved in chronological cell aging. The chain is Extender of the chronological lifespan protein 2 (ecl2) from Schizosaccharomyces pombe (strain 972 / ATCC 24843) (Fission yeast).